The sequence spans 156 residues: Toxin Res (156 aa).

It belongs to the MbcT/ParT/Res family. Homodimer. Forms a complex with cognate antitoxin Xre.

In terms of biological role, toxic component of a type II toxin-antitoxin (TA) system. Expression in E.coli inhibits cell growth; bacteriostasis is neutralized by expression of cognate antitoxin Xre. Expression in E.coli leads to almost complete depletion of intracellular NAD(+): NAD(+) levels are partially restored when coexpressed with antitoxin Xre. The chain is Toxin Res from Photorhabdus laumondii subsp. laumondii (strain DSM 15139 / CIP 105565 / TT01) (Photorhabdus luminescens subsp. laumondii).